The sequence spans 180 residues: ATP-dependent protease subunit HslV (180 aa).

Residue threonine 7 is part of the active site. Na(+) is bound by residues glycine 165, cysteine 168, and threonine 171.

Belongs to the peptidase T1B family. HslV subfamily. A double ring-shaped homohexamer of HslV is capped on each side by a ring-shaped HslU homohexamer. The assembly of the HslU/HslV complex is dependent on binding of ATP.

It localises to the cytoplasm. It carries out the reaction ATP-dependent cleavage of peptide bonds with broad specificity.. Its activity is regulated as follows. Allosterically activated by HslU binding. In terms of biological role, protease subunit of a proteasome-like degradation complex believed to be a general protein degrading machinery. The protein is ATP-dependent protease subunit HslV of Bacillus cereus (strain Q1).